The following is a 315-amino-acid chain: 2,3-dihydroxyphenylpropionate/2,3-dihydroxicinnamic acid 1,2-dioxygenase (315 aa).

Catalysis depends on His118, which acts as the Proton donor. His182 (proton acceptor) is an active-site residue.

This sequence belongs to the LigB/MhpB extradiol dioxygenase family. Homotetramer. Requires Fe(2+) as cofactor.

The catalysed reaction is 3-(2,3-dihydroxyphenyl)propanoate + O2 = (2Z,4E)-2-hydroxy-6-oxonona-2,4-dienedioate + H(+). The enzyme catalyses (2E)-3-(2,3-dihydroxyphenyl)prop-2-enoate + O2 = (2Z,4E,7E)-2-hydroxy-6-oxonona-2,4,7-trienedioate + H(+). It functions in the pathway aromatic compound metabolism; 3-phenylpropanoate degradation. Functionally, catalyzes the non-heme iron(II)-dependent oxidative cleavage of 2,3-dihydroxyphenylpropionic acid and 2,3-dihydroxicinnamic acid into 2-hydroxy-6-ketononadienedioate and 2-hydroxy-6-ketononatrienedioate, respectively. This Mycolicibacterium gilvum (strain PYR-GCK) (Mycobacterium gilvum (strain PYR-GCK)) protein is 2,3-dihydroxyphenylpropionate/2,3-dihydroxicinnamic acid 1,2-dioxygenase.